The following is a 222-amino-acid chain: 7-cyano-7-deazaguanine synthase (222 aa).

ATP is bound at residue 8 to 18 (LSGGMDSTTAA). 4 residues coordinate Zn(2+): Cys187, Cys195, Cys198, and Cys201.

It belongs to the QueC family. Requires Zn(2+) as cofactor.

The catalysed reaction is 7-carboxy-7-deazaguanine + NH4(+) + ATP = 7-cyano-7-deazaguanine + ADP + phosphate + H2O + H(+). Its pathway is purine metabolism; 7-cyano-7-deazaguanine biosynthesis. Catalyzes the ATP-dependent conversion of 7-carboxy-7-deazaguanine (CDG) to 7-cyano-7-deazaguanine (preQ(0)). The polypeptide is 7-cyano-7-deazaguanine synthase (Nautilia profundicola (strain ATCC BAA-1463 / DSM 18972 / AmH)).